We begin with the raw amino-acid sequence, 299 residues long: Hydroxymethylglutaryl-CoA lyase YngG (299 aa).

Positions 7–274 (VTIKEVGPRD…KTNVKLEKLL (268 aa)) constitute a Pyruvate carboxyltransferase domain. Arg15 provides a ligand contact to substrate. Asp16, His207, and His209 together coordinate a divalent metal cation. Cys240 is a catalytic residue. Asn249 lines the a divalent metal cation pocket.

Belongs to the HMG-CoA lyase family. Homodimer and homotetramer.

It catalyses the reaction (3S)-3-hydroxy-3-methylglutaryl-CoA = acetoacetate + acetyl-CoA. The protein operates within metabolic intermediate metabolism; (S)-3-hydroxy-3-methylglutaryl-CoA degradation; acetoacetate from (S)-3-hydroxy-3-methylglutaryl-CoA: step 1/1. In terms of biological role, involved in the catabolism of branched amino acids such as leucine. The sequence is that of Hydroxymethylglutaryl-CoA lyase YngG (yngG) from Bacillus subtilis (strain 168).